The sequence spans 296 residues: N-acetylmuramic acid 6-phosphate etherase 2 (296 aa).

The SIS domain maps to 55 to 218 (IIKSFNQGGR…STISMIGIGK (164 aa)). The active-site Proton donor is the glutamate 83. The active site involves glutamate 114.

The protein belongs to the GCKR-like family. MurNAc-6-P etherase subfamily. As to quaternary structure, homodimer.

It catalyses the reaction N-acetyl-D-muramate 6-phosphate + H2O = N-acetyl-D-glucosamine 6-phosphate + (R)-lactate. It functions in the pathway amino-sugar metabolism; N-acetylmuramate degradation. In terms of biological role, specifically catalyzes the cleavage of the D-lactyl ether substituent of MurNAc 6-phosphate, producing GlcNAc 6-phosphate and D-lactate. This is N-acetylmuramic acid 6-phosphate etherase 2 from Enterococcus faecalis (strain ATCC 700802 / V583).